Reading from the N-terminus, the 509-residue chain is Photosystem II CP47 reaction center protein (509 aa).

6 helical membrane passes run 21–36 (AVHL…WAGS), 101–115 (IGLS…IWHW), 140–156 (GIHL…FGAF), 203–218 (IAAG…FHLS), 237–252 (VLSS…AFIV), and 457–472 (SFAL…HGGR).

This sequence belongs to the PsbB/PsbC family. PsbB subfamily. In terms of assembly, PSII is composed of 1 copy each of membrane proteins PsbA, PsbB, PsbC, PsbD, PsbE, PsbF, PsbH, PsbI, PsbJ, PsbK, PsbL, PsbM, PsbT, PsbX, PsbY, PsbZ, Psb30/Ycf12, at least 3 peripheral proteins of the oxygen-evolving complex and a large number of cofactors. It forms dimeric complexes. The cofactor is Binds multiple chlorophylls. PSII binds additional chlorophylls, carotenoids and specific lipids..

Its subcellular location is the plastid. It localises to the cyanelle thylakoid membrane. Its function is as follows. One of the components of the core complex of photosystem II (PSII). It binds chlorophyll and helps catalyze the primary light-induced photochemical processes of PSII. PSII is a light-driven water:plastoquinone oxidoreductase, using light energy to abstract electrons from H(2)O, generating O(2) and a proton gradient subsequently used for ATP formation. This Cyanophora paradoxa protein is Photosystem II CP47 reaction center protein.